Here is a 55-residue protein sequence, read N- to C-terminus: Large ribosomal subunit protein bL33 (55 aa).

It belongs to the bacterial ribosomal protein bL33 family.

This Edwardsiella ictaluri (strain 93-146) protein is Large ribosomal subunit protein bL33.